A 122-amino-acid polypeptide reads, in one-letter code: Large ribosomal subunit protein uL14c (122 aa).

It belongs to the universal ribosomal protein uL14 family. As to quaternary structure, part of the 50S ribosomal subunit.

The protein localises to the plastid. It localises to the chloroplast. In terms of biological role, binds to 23S rRNA. In Nandina domestica (Heavenly bamboo), this protein is Large ribosomal subunit protein uL14c.